The chain runs to 517 residues: 2,3-bisphosphoglycerate-independent phosphoglycerate mutase 1 (517 aa).

The Mn(2+) site is built by Asp17 and Ser67. Residue Ser67 is the Phosphoserine intermediate of the active site. Residues His128, 158-159 (RD), Arg190, Arg196, 267-270 (RPDR), and Lys340 each bind substrate. Mn(2+)-binding residues include Asp407, His411, Asp448, His449, and His467.

The protein belongs to the BPG-independent phosphoglycerate mutase family. Requires Mn(2+) as cofactor.

It carries out the reaction (2R)-2-phosphoglycerate = (2R)-3-phosphoglycerate. It functions in the pathway carbohydrate degradation; glycolysis; pyruvate from D-glyceraldehyde 3-phosphate: step 3/5. In terms of biological role, catalyzes the interconversion of 2-phosphoglycerate and 3-phosphoglycerate. The protein is 2,3-bisphosphoglycerate-independent phosphoglycerate mutase 1 of Methanosarcina barkeri (strain Fusaro / DSM 804).